The following is a 71-amino-acid chain: 7.9 kDa protein (71 aa).

This Pseudomonas aeruginosa (Bacteriophage Pf3) protein is 7.9 kDa protein.